The sequence spans 1187 residues: BAI1-associated protein 3 (1187 aa).

A disordered region spans residues 55–81 (SFRRRTEQDPGSASADPQEPATGAWKP). In terms of domain architecture, C2 1 spans 176–335 (SLEEHTEAIE…VKSARANGTA (160 aa)). Positions 211, 217, 295, and 297 each coordinate Ca(2+). Residues 663–784 (FELYLTLADL…EATLFYTELL (122 aa)) form the MHD1 domain. The MHD2 domain occupies 888–996 (DEAVAPLMKY…CSTRECIEQF (109 aa)). Positions 1010–1136 (RFGRLSVRCH…GVARPQVGGG (127 aa)) constitute a C2 2 domain. The Ca(2+) site is built by leucine 1040, aspartate 1041, aspartate 1047, aspartate 1105, aspartate 1107, serine 1110, and aspartate 1113.

This sequence belongs to the unc-13 family. As to quaternary structure, interacts with ADGRB1; this interaction is direct. Interacts with endosomal SNARE proteins VAMP3, VAMP4, STX6 and STX16; this interaction is increased in the presence of calcium. The cofactor is Ca(2+). In terms of tissue distribution, predominantly expressed in brain. Also expressed in nonneural tissues such as breast and testes epithelium.

The protein localises to the cytoplasm. It localises to the cytosol. Its subcellular location is the recycling endosome membrane. The protein resides in the late endosome membrane. It is found in the golgi apparatus. The protein localises to the trans-Golgi network membrane. It localises to the cell membrane. Functions in endosome to Golgi retrograde transport. In response to calcium influx, may interact with SNARE fusion receptors and membrane phospholipids to mediate endosome fusion with the trans-Golgi network. By promoting the recycling of secretory vesicle transmembrane proteins, it indirectly controls dense-core secretory vesicle biogenesis, maturation and their ability to mediate the constitutive and regulated secretion of neurotransmitters and hormones. May regulate behavior and food intake by controlling calcium-stimulated exocytosis of neurotransmitters including NPY and serotonin and hormones like insulin. Proposed to play a role in hypothalamic neuronal firing by modulating gamma-aminobutyric acid (GABA)ergic inhibitory neurotransmission. In Homo sapiens (Human), this protein is BAI1-associated protein 3.